A 311-amino-acid chain; its full sequence is Probable deoxyhypusine synthase (311 aa).

The active-site Nucleophile is Lys-284.

The protein belongs to the deoxyhypusine synthase family. It depends on NAD(+) as a cofactor.

It catalyses the reaction [eIF5A protein]-L-lysine + spermidine = [eIF5A protein]-deoxyhypusine + propane-1,3-diamine. It participates in protein modification; eIF5A hypusination. In terms of biological role, catalyzes the NAD-dependent oxidative cleavage of spermidine and the subsequent transfer of the butylamine moiety of spermidine to the epsilon-amino group of a specific lysine residue of the eIF-5A precursor protein to form the intermediate deoxyhypusine residue. In Sulfolobus acidocaldarius (strain ATCC 33909 / DSM 639 / JCM 8929 / NBRC 15157 / NCIMB 11770), this protein is Probable deoxyhypusine synthase.